Here is a 314-residue protein sequence, read N- to C-terminus: Solute carrier family 25 member 44 (314 aa).

Solcar repeat units follow at residues 18 to 100 (KKFY…TRKF), 107 to 210 (SNTV…YAEQ), and 220 to 302 (PHIV…LKKL). The next 6 membrane-spanning stretches (helical) occupy residues 20–42 (FYVF…TLIR), 71–90 (TGLY…GQCY), 113–133 (LVAG…IDVV), 185–201 (GYVA…AVWW), 222–239 (IVFQ…ASIL), and 278–296 (LSAR…VVGY).

The protein belongs to the mitochondrial carrier (TC 2.A.29) family.

Its subcellular location is the mitochondrion membrane. It carries out the reaction L-valine(in) = L-valine(out). It catalyses the reaction L-leucine(in) = L-leucine(out). Functionally, mitochondrial solute transporter which transports branched-chain amino acid (BCAA; valine, leucine and isoleucine) into mitochondria in brown adipose tissue (BAT). BAT is involved in BCAA catabolism and actively utilizes BCAA in the mitochondria for thermogenesis. In Homo sapiens (Human), this protein is Solute carrier family 25 member 44.